The following is a 293-amino-acid chain: MMRIALFLLTNLAVMVVFGLVLSLTGIQSSSVQGLMIMALLFGFGGSFVSLLMSKWMALRSVGGEVIEQPRNERERWLVNTVATQACQAGIAMPQVAIYHAPDINAFATGARRDASLVAVSTGLLQNMSPDEAEAVIAHEISHIANGDMVTMTLIQGVVNTFVIFISRILAQLAAGFMGGNRDEGEESNGNPLIYFAVATVLELVFGILASIITMWFSRHREFHADAGSAKLVGREKMIAALQRLKTSYEPQEATSMMAFCINGKSKSLSELFMTHPPLDKRIEALRTGEYLK.

2 helical membrane passes run 4 to 24 and 34 to 54; these read IALFLLTNLAVMVVFGLVLSL and GLMIMALLFGFGGSFVSLLMS. His-139 contacts Zn(2+). Residue Glu-140 is part of the active site. Zn(2+) is bound at residue His-143. Transmembrane regions (helical) follow at residues 158 to 178 and 193 to 213; these read VVNTFVIFISRILAQLAAGFM and LIYFAVATVLELVFGILASII. Glu-222 provides a ligand contact to Zn(2+).

This sequence belongs to the peptidase M48B family. It depends on Zn(2+) as a cofactor.

The protein localises to the cell inner membrane. This is Protease HtpX from Escherichia coli O127:H6 (strain E2348/69 / EPEC).